Here is a 1593-residue protein sequence, read N- to C-terminus: Autotransporter CRAC (1593 aa).

Residues 1-54 (MNKVYNTVWNESTGMWVVTSELTRKGGRRPRQIRRTALAGLIAGLLLPSAPALA) form the signal peptide. Over residues 65–85 (GATSSSMSLNAGDTATDTTIN) the composition is skewed to polar residues. Disordered regions lie at residues 65–100 (GATS…SATS) and 1267–1286 (KADS…PVPP). Residues 86 to 97 (SGGSQRVSSGGS) are compositionally biased toward low complexity. Positions 1269–1280 (DSSQPGTDNPGT) are enriched in polar residues. The 269-residue stretch at 1325-1593 (NTRSPGGVWG…TGSVGFRINF (269 aa)) folds into the Autotransporter domain.

In terms of processing, glycosylated by heptosyltransferas BAHTCr. Glycosylation is required for adhesion to mammalian cells and colonization of the mouse host gastrointestinal tract.

Its subcellular location is the cell outer membrane. Its function is as follows. Autotransporter required for the colonization of the mouse host gastrointestinal tract, possibly by mediating bacteria adhesion to host cells. This is Autotransporter CRAC from Citrobacter rodentium (strain ICC168) (Citrobacter freundii biotype 4280).